Reading from the N-terminus, the 374-residue chain is Cell division protein DivIB (374 aa).

Positions 1 to 90 (MWKISNENDI…EEEHFADRLP (90 aa)) are disordered. Over 1–103 (MWKISNENDI…KTRNKRLYRR (103 aa)) the chain is Cytoplasmic. Residues 39–53 (YLKKQAEEAASKGEN) are compositionally biased toward basic and acidic residues. Residues 56 to 75 (AEVTITLQEQSQEEPQQHLP) show a composition bias toward polar residues. A helical membrane pass occupies residues 104 to 124 (LAFILTCLGTAILVALYFVSP). Residues 125 to 374 (LSRLSEVTVS…GENQEVQQAE (250 aa)) lie on the Extracellular side of the membrane. A POTRA domain is found at 126-197 (SRLSEVTVSG…NSFKIDIQEY (72 aa)). The disordered stretch occupies residues 325-374 (KESEETGSEVSEDSAVENQEVVDPNAGVATDGANNGTPTNGENQEVQQAE). Residues 326-339 (ESEETGSEVSEDSA) show a composition bias toward acidic residues. A compositionally biased stretch (polar residues) spans 356-374 (GANNGTPTNGENQEVQQAE).

The protein belongs to the FtsQ/DivIB family. DivIB subfamily.

Its subcellular location is the cell membrane. In terms of biological role, cell division protein that may be involved in stabilizing or promoting the assembly of the division complex. This chain is Cell division protein DivIB, found in Enterococcus faecalis (strain 62).